The following is a 311-amino-acid chain: Syndecan-1 (311 aa).

An N-terminal signal peptide occupies residues 1-22 (MRRAALWLWLCALALRLQPALP). Over 23 to 255 (QIVAVNVPPE…SLLDRKEVLG (233 aa)) the chain is Extracellular. 2 disordered regions span residues 29-59 (VPPEDQDGSGDDSDNFSGSGTGALPDTLSRQ) and 152-184 (SHPHGGMQPGLHETSAPTAPGQPDHQPPRVEGG). Acidic residues predominate over residues 32 to 42 (EDQDGSGDDSD). An O-linked (Xyl...) (chondroitin sulfate) serine glycan is attached at serine 37. Residue asparagine 43 is glycosylated (N-linked (GlcNAc...) asparagine). O-linked (Xyl...) (heparan sulfate) serine glycans are attached at residues serine 45 and serine 47. Residues serine 207 and serine 217 are each glycosylated (O-linked (Xyl...) (chondroitin sulfate) serine). Residues 256–276 (GVIAGGLVGLIFAVCLVAFML) traverse the membrane as a helical segment. At 277–311 (YRMKKKDEGSYSLEEPKQANGGAYQKPTKQEEFYA) the chain is on the cytoplasmic side. The disordered stretch occupies residues 285–311 (GSYSLEEPKQANGGAYQKPTKQEEFYA). At serine 286 the chain carries Phosphoserine.

The protein belongs to the syndecan proteoglycan family. Interacts with CDCP1. Interacts (via C-terminus) with TIAM1 (via PDZ domain). Interacts with MDK. In terms of processing, shedding is enhanced by a number of factors such as heparanase, thrombin or EGF. Also by stress and wound healing. PMA-mediated shedding is inhibited by TIMP3.

The protein resides in the membrane. Its subcellular location is the secreted. It is found in the extracellular exosome. Cell surface proteoglycan that contains both heparan sulfate and chondroitin sulfate and that links the cytoskeleton to the interstitial matrix. Regulates exosome biogenesis in concert with SDCBP and PDCD6IP. Able to induce its own expression in dental mesenchymal cells and also in the neighboring dental epithelial cells via an MSX1-mediated pathway. This Mus musculus (Mouse) protein is Syndecan-1.